Here is a 126-residue protein sequence, read N- to C-terminus: Ribosome-binding factor A (126 aa).

It belongs to the RbfA family. Monomer. Binds 30S ribosomal subunits, but not 50S ribosomal subunits or 70S ribosomes.

The protein resides in the cytoplasm. Functionally, one of several proteins that assist in the late maturation steps of the functional core of the 30S ribosomal subunit. Associates with free 30S ribosomal subunits (but not with 30S subunits that are part of 70S ribosomes or polysomes). Required for efficient processing of 16S rRNA. May interact with the 5'-terminal helix region of 16S rRNA. The polypeptide is Ribosome-binding factor A (Histophilus somni (strain 129Pt) (Haemophilus somnus)).